Here is a 305-residue protein sequence, read N- to C-terminus: Glycine--tRNA ligase alpha subunit (305 aa).

Belongs to the class-II aminoacyl-tRNA synthetase family. As to quaternary structure, tetramer of two alpha and two beta subunits.

The protein localises to the cytoplasm. It catalyses the reaction tRNA(Gly) + glycine + ATP = glycyl-tRNA(Gly) + AMP + diphosphate. This Vibrio parahaemolyticus serotype O3:K6 (strain RIMD 2210633) protein is Glycine--tRNA ligase alpha subunit.